The primary structure comprises 217 residues: Large ribosomal subunit protein uL1 (217 aa).

N-acetylserine is present on S2. Y11 carries the phosphotyrosine modification. N6-acetyllysine occurs at positions 91 and 106. The residue at position 118 (K118) is an N6-acetyllysine; alternate. K118 participates in a covalent cross-link: Glycyl lysine isopeptide (Lys-Gly) (interchain with G-Cter in SUMO1); alternate. A Glycyl lysine isopeptide (Lys-Gly) (interchain with G-Cter in SUMO2); alternate cross-link involves residue K118. Residue K161 forms a Glycyl lysine isopeptide (Lys-Gly) (interchain with G-Cter in SUMO2) linkage.

Belongs to the universal ribosomal protein uL1 family. As to quaternary structure, component of the large ribosomal subunit.

The protein localises to the cytoplasm. Its function is as follows. Component of the large ribosomal subunit. The ribosome is a large ribonucleoprotein complex responsible for the synthesis of proteins in the cell. This chain is Large ribosomal subunit protein uL1 (RPL10A), found in Bos taurus (Bovine).